Consider the following 522-residue polypeptide: Protein nucleotidyltransferase YdiU (522 aa).

ATP-binding residues include G109, G111, R112, K132, D144, G145, R195, and R202. Residue D271 is the Proton acceptor of the active site. Mg(2+)-binding residues include N272 and D281. D281 is an ATP binding site.

The protein belongs to the SELO family. Mg(2+) serves as cofactor. Mn(2+) is required as a cofactor.

The catalysed reaction is L-seryl-[protein] + ATP = 3-O-(5'-adenylyl)-L-seryl-[protein] + diphosphate. It catalyses the reaction L-threonyl-[protein] + ATP = 3-O-(5'-adenylyl)-L-threonyl-[protein] + diphosphate. It carries out the reaction L-tyrosyl-[protein] + ATP = O-(5'-adenylyl)-L-tyrosyl-[protein] + diphosphate. The enzyme catalyses L-histidyl-[protein] + UTP = N(tele)-(5'-uridylyl)-L-histidyl-[protein] + diphosphate. The catalysed reaction is L-seryl-[protein] + UTP = O-(5'-uridylyl)-L-seryl-[protein] + diphosphate. It catalyses the reaction L-tyrosyl-[protein] + UTP = O-(5'-uridylyl)-L-tyrosyl-[protein] + diphosphate. Functionally, nucleotidyltransferase involved in the post-translational modification of proteins. It can catalyze the addition of adenosine monophosphate (AMP) or uridine monophosphate (UMP) to a protein, resulting in modifications known as AMPylation and UMPylation. This chain is Protein nucleotidyltransferase YdiU, found in Burkholderia multivorans (strain ATCC 17616 / 249).